We begin with the raw amino-acid sequence, 491 residues long: Ketol-acid reductoisomerase (NADP(+)) (491 aa).

Positions 15–208 (AQLGKCRFMG…GGHRAGVLES (194 aa)) constitute a KARI N-terminal Rossmann domain. NADP(+) contacts are provided by residues 45 to 48 (CGAQ), Arg68, Arg76, Ser78, and 108 to 110 (DKQ). The active site involves His132. NADP(+) is bound at residue Gly158. KARI C-terminal knotted domains lie at 209–344 (SFVA…TAPQ) and 345–484 (YEGK…MTDM). Residues Asp217, Glu221, Glu389, and Glu393 each contribute to the Mg(2+) site. Ser414 serves as a coordination point for substrate.

This sequence belongs to the ketol-acid reductoisomerase family. It depends on Mg(2+) as a cofactor.

It catalyses the reaction (2R)-2,3-dihydroxy-3-methylbutanoate + NADP(+) = (2S)-2-acetolactate + NADPH + H(+). The catalysed reaction is (2R,3R)-2,3-dihydroxy-3-methylpentanoate + NADP(+) = (S)-2-ethyl-2-hydroxy-3-oxobutanoate + NADPH + H(+). Its pathway is amino-acid biosynthesis; L-isoleucine biosynthesis; L-isoleucine from 2-oxobutanoate: step 2/4. It functions in the pathway amino-acid biosynthesis; L-valine biosynthesis; L-valine from pyruvate: step 2/4. In terms of biological role, involved in the biosynthesis of branched-chain amino acids (BCAA). Catalyzes an alkyl-migration followed by a ketol-acid reduction of (S)-2-acetolactate (S2AL) to yield (R)-2,3-dihydroxy-isovalerate. In the isomerase reaction, S2AL is rearranged via a Mg-dependent methyl migration to produce 3-hydroxy-3-methyl-2-ketobutyrate (HMKB). In the reductase reaction, this 2-ketoacid undergoes a metal-dependent reduction by NADPH to yield (R)-2,3-dihydroxy-isovalerate. The protein is Ketol-acid reductoisomerase (NADP(+)) of Citrobacter koseri (strain ATCC BAA-895 / CDC 4225-83 / SGSC4696).